The following is a 426-amino-acid chain: PI-PLC X domain-containing protein At5g67130 (426 aa).

The first 28 residues, 1 to 28 (MSACINGLCRAVTVSLLLLLLSFSFSSA), serve as a signal peptide directing secretion. The region spanning 76 to 232 (IINGLPFNKY…MVQENHRLLV (157 aa)) is the PI-PLC X-box domain. N-linked (GlcNAc...) asparagine glycans are attached at residues asparagine 151 and asparagine 255. The tract at residues 258 to 277 (GDPGVKRGSCPNRKESQPLN) is disordered. Asparagine 370 is a glycosylation site (N-linked (GlcNAc...) asparagine). Residue serine 404 is the site of GPI-anchor amidated serine attachment. Residues 405–426 (VAQLNNIVVFCFSLLPLLIFLL) constitute a propeptide, removed in mature form.

The protein resides in the cell membrane. The polypeptide is PI-PLC X domain-containing protein At5g67130 (Arabidopsis thaliana (Mouse-ear cress)).